Here is a 134-residue protein sequence, read N- to C-terminus: MGKDTIADIITSIRNADMNRKGTIQIGSTNITENIVQILLREGFIDNVRKHRERNKYFLVLTLRHRRNRKGPHRTILNLRRISRPGLRIYSNYQQIPRILGGMGIVILSTSRGIMTDREARLEGIGGEILCYIW.

The protein belongs to the universal ribosomal protein uS8 family. As to quaternary structure, part of the 30S ribosomal subunit.

It is found in the plastid. The protein localises to the chloroplast. In terms of biological role, one of the primary rRNA binding proteins, it binds directly to 16S rRNA central domain where it helps coordinate assembly of the platform of the 30S subunit. The sequence is that of Small ribosomal subunit protein uS8c (rps8) from Gossypium barbadense (Sea Island cotton).